The primary structure comprises 180 residues: MSGRINVVQGDITLIDVDVIVNAANPSLMGGGGVDGAIHRAAGPALLAACRQVRQQQGECQPGHAVITEAGDLAAKAVVHTVGPVWRGGQDNEPQLLADAYRNSLQLVAANGYNSVAFPAISTGIYGYPKAAAAQIAFETVSDYLTRHPQPKQVYFVCYDEENFLLYQRLLGQYDEQPGA.

The region spanning 1–175 (MSGRINVVQG…LYQRLLGQYD (175 aa)) is the Macro domain. Substrate is bound by residues 11–12 (DI), Asn25, 33–35 (GVD), and 122–126 (STGIY). The active-site Proton acceptor is Asp35.

This sequence belongs to the MacroD-type family. YmdB subfamily. Homodimer. Interacts with RNase III.

It carries out the reaction 3''-O-acetyl-ADP-D-ribose + H2O = ADP-D-ribose + acetate + H(+). The catalysed reaction is 2''-O-acetyl-ADP-D-ribose + H2O = ADP-D-ribose + acetate + H(+). Deacetylates O-acetyl-ADP ribose to yield ADP-ribose and free acetate. Down-regulates ribonuclease 3 (RNase III) activity. Acts by interacting directly with the region of the ribonuclease that is required for dimerization/activation. The chain is O-acetyl-ADP-ribose deacetylase from Cronobacter sakazakii (strain ATCC BAA-894) (Enterobacter sakazakii).